Here is a 658-residue protein sequence, read N- to C-terminus: Ubiquilin-3 (658 aa).

The 75-residue stretch at 22-96 folds into the Ubiquitin-like domain; sequence IRVTVKTPKD…VHLVIKMQRR (75 aa). Residues 194–233 enclose the STI1 domain; it reads NPHMQHLIQQNPEIGHILNNPEIMRQTMEFLRNPSMMQEM. Positions 280–291 are enriched in low complexity; that stretch reads TATTASTTTTSS. 2 disordered regions span residues 280 to 336 and 362 to 478; these read TATT…RNRL and YLQG…PESP. A compositionally biased stretch (gly residues) spans 312-323; the sequence is VSGGRQGRGGRQ. Polar residues-rich tracts occupy residues 362–379, 389–400, and 438–469; these read YLQGTVPTSNPSQESPLS, SSPKSGSGQSLP, and TGPSTSLPNLTSQIGDSANRSSFVSTPSSLMS. One can recognise a UBA domain in the interval 614–658; that stretch reads QLEAHFRVQLEQLRAMGFLNLEANLQALIATEGDVDAAVEKLRKS.

In terms of tissue distribution, testis-specific (at protein level).

This is Ubiquilin-3 (Ubqln3) from Mus musculus (Mouse).